The following is a 329-amino-acid chain: 4-hydroxythreonine-4-phosphate dehydrogenase (329 aa).

Positions 136 and 137 each coordinate substrate. 3 residues coordinate a divalent metal cation: His-166, His-211, and His-266. Residues Lys-274, Asn-283, and Arg-292 each coordinate substrate.

It belongs to the PdxA family. In terms of assembly, homodimer. Zn(2+) serves as cofactor. The cofactor is Mg(2+). Co(2+) is required as a cofactor.

The protein localises to the cytoplasm. It catalyses the reaction 4-(phosphooxy)-L-threonine + NAD(+) = 3-amino-2-oxopropyl phosphate + CO2 + NADH. It functions in the pathway cofactor biosynthesis; pyridoxine 5'-phosphate biosynthesis; pyridoxine 5'-phosphate from D-erythrose 4-phosphate: step 4/5. Functionally, catalyzes the NAD(P)-dependent oxidation of 4-(phosphooxy)-L-threonine (HTP) into 2-amino-3-oxo-4-(phosphooxy)butyric acid which spontaneously decarboxylates to form 3-amino-2-oxopropyl phosphate (AHAP). The chain is 4-hydroxythreonine-4-phosphate dehydrogenase from Escherichia coli O7:K1 (strain IAI39 / ExPEC).